The chain runs to 853 residues: DNA mismatch repair protein MutS (853 aa).

Position 614 to 621 (614 to 621 (GPNMGGKS)) interacts with ATP.

The protein belongs to the DNA mismatch repair MutS family.

In terms of biological role, this protein is involved in the repair of mismatches in DNA. It is possible that it carries out the mismatch recognition step. This protein has a weak ATPase activity. In Escherichia coli O1:K1 / APEC, this protein is DNA mismatch repair protein MutS.